A 323-amino-acid chain; its full sequence is tRNA U34 carboxymethyltransferase (323 aa).

Carboxy-S-adenosyl-L-methionine-binding positions include K91, W105, K110, G130, 152–154 (DPT), 181–182 (IE), M196, Y200, and R315.

Belongs to the class I-like SAM-binding methyltransferase superfamily. CmoB family. In terms of assembly, homotetramer.

It carries out the reaction carboxy-S-adenosyl-L-methionine + 5-hydroxyuridine(34) in tRNA = 5-carboxymethoxyuridine(34) in tRNA + S-adenosyl-L-homocysteine + H(+). Its function is as follows. Catalyzes carboxymethyl transfer from carboxy-S-adenosyl-L-methionine (Cx-SAM) to 5-hydroxyuridine (ho5U) to form 5-carboxymethoxyuridine (cmo5U) at position 34 in tRNAs. This Escherichia coli O7:K1 (strain IAI39 / ExPEC) protein is tRNA U34 carboxymethyltransferase.